We begin with the raw amino-acid sequence, 203 residues long: uncharacterized protein (203 aa).

Transmembrane regions (helical) follow at residues 9-29, 42-62, 86-106, and 126-146; these read YNVFVANLALVLGFMLNIVVA, FLFLTPFLGIVAASIFYFFDV, SGVFVFFANILVNVILLALLV, and YPLLWSAVGVSIFLSLISIGL. 2 stretches are compositionally biased toward basic and acidic residues: residues 164 to 174 and 182 to 191; these read GEPTAADKTDS and DQTKSKKDGD. The tract at residues 164–203 is disordered; the sequence is GEPTAADKTDSRPVVVDLDQTKSKKDGDNPPQASGDMTSL. Residues 194 to 203 are compositionally biased toward polar residues; it reads PQASGDMTSL.

It localises to the cell membrane. This is an uncharacterized protein from Mycoplasma pneumoniae (strain ATCC 29342 / M129 / Subtype 1) (Mycoplasmoides pneumoniae).